Here is a 357-residue protein sequence, read N- to C-terminus: Chaperone protein DnaJ (357 aa).

A J domain is found at 4 to 69 (DYYAILGVDR…QKRKQYDETG (66 aa)). A CR-type zinc finger spans residues 132–213 (GASKNVKYRR…CHGTGTVSKN (82 aa)). Positions 145, 148, 161, 164, 187, 190, 201, and 204 each coordinate Zn(2+). CXXCXGXG motif repeat units follow at residues 145–152 (CEHCSGTG), 161–168 (CPTCHGSG), 187–194 (CRTCHGRG), and 201–208 (CTVCHGTG).

It belongs to the DnaJ family. Homodimer. It depends on Zn(2+) as a cofactor.

Its subcellular location is the cytoplasm. In terms of biological role, participates actively in the response to hyperosmotic and heat shock by preventing the aggregation of stress-denatured proteins and by disaggregating proteins, also in an autonomous, DnaK-independent fashion. Unfolded proteins bind initially to DnaJ; upon interaction with the DnaJ-bound protein, DnaK hydrolyzes its bound ATP, resulting in the formation of a stable complex. GrpE releases ADP from DnaK; ATP binding to DnaK triggers the release of the substrate protein, thus completing the reaction cycle. Several rounds of ATP-dependent interactions between DnaJ, DnaK and GrpE are required for fully efficient folding. Also involved, together with DnaK and GrpE, in the DNA replication of plasmids through activation of initiation proteins. In Picrophilus torridus (strain ATCC 700027 / DSM 9790 / JCM 10055 / NBRC 100828 / KAW 2/3), this protein is Chaperone protein DnaJ.